The primary structure comprises 368 residues: UPF0284 protein PCC8801_3324 (368 aa).

It belongs to the UPF0284 family.

The chain is UPF0284 protein PCC8801_3324 from Rippkaea orientalis (strain PCC 8801 / RF-1) (Cyanothece sp. (strain PCC 8801)).